A 295-amino-acid polypeptide reads, in one-letter code: Nucleotide-binding protein LSEI_0959 (295 aa).

12 to 19 contacts ATP; that stretch reads GMSGAGKT. 62-65 contributes to the GTP binding site; that stretch reads DLRS.

Belongs to the RapZ-like family.

Displays ATPase and GTPase activities. The sequence is that of Nucleotide-binding protein LSEI_0959 from Lacticaseibacillus paracasei (strain ATCC 334 / BCRC 17002 / CCUG 31169 / CIP 107868 / KCTC 3260 / NRRL B-441) (Lactobacillus paracasei).